We begin with the raw amino-acid sequence, 71 residues long: DNA-directed RNA polymerase subunit 10-like protein (71 aa).

Cys-7, Cys-10, Cys-44, and Cys-45 together coordinate Zn(2+).

The protein belongs to the archaeal Rpo10/eukaryotic RPB10 RNA polymerase subunit family. In terms of assembly, interacts with IYO.

The protein resides in the nucleus. The polypeptide is DNA-directed RNA polymerase subunit 10-like protein (Arabidopsis thaliana (Mouse-ear cress)).